We begin with the raw amino-acid sequence, 156 residues long: Snaclec stejaggregin-B subunit alpha (156 aa).

The signal sequence occupies residues 1 to 23 (MGRFISVSFGLLVVFLSLSGTGA). 3 disulfide bridges follow: Cys-25/Cys-36, Cys-53/Cys-150, and Cys-125/Cys-142. The region spanning 32–151 (FKQYCYQIIK…CEQKHLFMCK (120 aa)) is the C-type lectin domain.

The protein belongs to the snaclec family. As to quaternary structure, heteromultimer; disulfide-linked. In terms of tissue distribution, expressed by the venom gland.

The protein localises to the secreted. Interferes with one step of hemostasis (modulation of platelet aggregation, or coagulation cascade, for example). This Trimeresurus stejnegeri (Chinese green tree viper) protein is Snaclec stejaggregin-B subunit alpha.